The sequence spans 109 residues: Prothymosin alpha (109 aa).

The interval 1–109 is disordered; sequence MSDTSVDASV…AKKQKTDDDD (109 aa). The segment covering 9–35 has biased composition (basic and acidic residues); that stretch reads SVEKTTKDLKSKDKELVEETENGKDKP. Residues 41-81 are compositionally biased toward acidic residues; it reads ENEENGEDGADNEEEEEVDEEDEEDEGEGDDDEGDEDDEAD. The span at 99 to 109 shows a compositional bias: basic and acidic residues; sequence DAKKQKTDDDD.

The protein belongs to the pro/parathymosin family. As to expression, highly expressed in the testis.

It is found in the nucleus. Its function is as follows. May have role in testicular activity. This is Prothymosin alpha from Pelophylax lessonae (Pool frog).